A 270-amino-acid polypeptide reads, in one-letter code: Glutamate racemase (270 aa).

Substrate is bound by residues Asp-15–Ser-16 and Tyr-47–Gly-48. The active-site Proton donor/acceptor is Cys-78. A substrate-binding site is contributed by Asn-79–Thr-80. Cys-189 serves as the catalytic Proton donor/acceptor. A substrate-binding site is contributed by Thr-190–His-191.

This sequence belongs to the aspartate/glutamate racemases family.

It carries out the reaction L-glutamate = D-glutamate. It participates in cell wall biogenesis; peptidoglycan biosynthesis. Its function is as follows. Provides the (R)-glutamate required for cell wall biosynthesis. The polypeptide is Glutamate racemase (Syntrophus aciditrophicus (strain SB)).